Reading from the N-terminus, the 272-residue chain is NADH-cytochrome b5 reductase 3 (272 aa).

In terms of domain architecture, FAD-binding FR-type spans Asp11–Gln123. N6-acetyllysine is present on Lys13. At Tyr14 the chain carries Phosphotyrosine. Lys21 is subject to N6-acetyllysine. 6 residues coordinate FAD: Arg63, Pro64, Tyr65, Val80, Lys82, and Tyr84. Residue Lys91 is modified to N6-acetyllysine. The FAD site is built by Lys97, Met98, Ser99, and Thr156.

The protein belongs to the flavoprotein pyridine nucleotide cytochrome reductase family. As to quaternary structure, component of a complex composed of cytochrome b5, NADH-cytochrome b5 reductase (CYB5R3) and MTARC2. Interacts with MTLN; the interaction is required to maintain cellular lipid composition and leads to stimulation of mitochondrial respiratory complex I activity. FAD is required as a cofactor.

The protein localises to the endoplasmic reticulum membrane. It localises to the mitochondrion outer membrane. The catalysed reaction is 2 Fe(III)-[cytochrome b5] + NADH = 2 Fe(II)-[cytochrome b5] + NAD(+) + H(+). Its function is as follows. Catalyzes the reduction of two molecules of cytochrome b5 using NADH as the electron donor. The sequence is that of NADH-cytochrome b5 reductase 3 (CYB5R3) from Sus scrofa (Pig).